The chain runs to 125 residues: MADLQKIVDDLSSLTVLEAAELAKLLEEKWGVSAAAAVAVAAPGGGGAAAAPAEEKTEFTVVLASAGDKKIEVIKEVRAITGLGLKEAKDLVEGAPKPVKEGVNKEEAEKIKGQLEKAGAKVELK.

This sequence belongs to the bacterial ribosomal protein bL12 family. As to quaternary structure, homodimer. Part of the ribosomal stalk of the 50S ribosomal subunit. Forms a multimeric L10(L12)X complex, where L10 forms an elongated spine to which 2 to 4 L12 dimers bind in a sequential fashion. Binds GTP-bound translation factors.

Its function is as follows. Forms part of the ribosomal stalk which helps the ribosome interact with GTP-bound translation factors. Is thus essential for accurate translation. The polypeptide is Large ribosomal subunit protein bL12 (Bradyrhizobium sp. (strain ORS 278)).